The chain runs to 229 residues: 5'-methylthioadenosine/S-adenosylhomocysteine nucleosidase (229 aa).

The active-site Proton acceptor is Glu12. Substrate is bound by residues Gly78, Ile152, and 173-174; that span reads ME. The active-site Proton donor is Asp197.

The protein belongs to the PNP/UDP phosphorylase family. MtnN subfamily.

The enzyme catalyses S-adenosyl-L-homocysteine + H2O = S-(5-deoxy-D-ribos-5-yl)-L-homocysteine + adenine. The catalysed reaction is S-methyl-5'-thioadenosine + H2O = 5-(methylsulfanyl)-D-ribose + adenine. It catalyses the reaction 5'-deoxyadenosine + H2O = 5-deoxy-D-ribose + adenine. It participates in amino-acid biosynthesis; L-methionine biosynthesis via salvage pathway; S-methyl-5-thio-alpha-D-ribose 1-phosphate from S-methyl-5'-thioadenosine (hydrolase route): step 1/2. Catalyzes the irreversible cleavage of the glycosidic bond in both 5'-methylthioadenosine (MTA) and S-adenosylhomocysteine (SAH/AdoHcy) to adenine and the corresponding thioribose, 5'-methylthioribose and S-ribosylhomocysteine, respectively. Also cleaves 5'-deoxyadenosine, a toxic by-product of radical S-adenosylmethionine (SAM) enzymes, into 5-deoxyribose and adenine. The sequence is that of 5'-methylthioadenosine/S-adenosylhomocysteine nucleosidase from Baumannia cicadellinicola subsp. Homalodisca coagulata.